We begin with the raw amino-acid sequence, 305 residues long: NAD-dependent protein deacylase SIR4 (305 aa).

The N-terminal 10 residues, 1–10, are a transit peptide targeting the mitochondrion; the sequence is MSAQVMHNRV. Residues 11–305 enclose the Deacetylase sirtuin-type domain; that stretch reads MGTVKDSASK…VLEELASTIR (295 aa). Residues 37–57 and 118–121 each bind NAD(+); these read GAGV…GIYS and QNVD. His139 acts as the Proton acceptor in catalysis. Residues Cys147, Cys150, Cys209, and Cys212 each contribute to the Zn(2+) site. NAD(+) is bound by residues 249 to 251, 275 to 277, and Ser293; these read GSS and NLG.

This sequence belongs to the sirtuin family. Class II subfamily. Zn(2+) is required as a cofactor.

It localises to the mitochondrion matrix. It catalyses the reaction N(6)-acetyl-L-lysyl-[protein] + NAD(+) + H2O = 2''-O-acetyl-ADP-D-ribose + nicotinamide + L-lysyl-[protein]. Functionally, NAD-dependent protein deacylase. Catalyzes the NAD-dependent hydrolysis of acyl groups from lysine residues. The polypeptide is NAD-dependent protein deacylase SIR4 (Batrachochytrium dendrobatidis (strain JAM81 / FGSC 10211) (Frog chytrid fungus)).